The chain runs to 253 residues: rRNA adenine N-6-methyltransferase (253 aa).

Residues Asn14, Leu16, Gly40, Glu61, Asp85, and Asn101 each coordinate S-adenosyl-L-methionine. Residues 229–253 (CAREESTPRPYLPDCTPTTGSISSR) form a disordered region. A compositionally biased stretch (polar residues) spans 244–253 (TPTTGSISSR).

Belongs to the class I-like SAM-binding methyltransferase superfamily. rRNA adenine N(6)-methyltransferase family.

Functionally, involved in erythromycin resistance. This Corynebacterium diphtheriae protein is rRNA adenine N-6-methyltransferase (ermA).